The primary structure comprises 155 residues: Small ribosomal subunit protein uS7c (155 aa).

Belongs to the universal ribosomal protein uS7 family. In terms of assembly, part of the 30S ribosomal subunit.

It is found in the plastid. Its subcellular location is the chloroplast. Functionally, one of the primary rRNA binding proteins, it binds directly to 16S rRNA where it nucleates assembly of the head domain of the 30S subunit. In Aristolochia macrophylla (Dutchman's pipe vine), this protein is Small ribosomal subunit protein uS7c (rps7).